Here is a 161-residue protein sequence, read N- to C-terminus: Ribosome maturation factor RimP (161 aa).

This sequence belongs to the RimP family.

It is found in the cytoplasm. Its function is as follows. Required for maturation of 30S ribosomal subunits. In Herminiimonas arsenicoxydans, this protein is Ribosome maturation factor RimP.